We begin with the raw amino-acid sequence, 362 residues long: Aminomethyltransferase (362 aa).

The protein belongs to the GcvT family. In terms of assembly, the glycine cleavage system is composed of four proteins: P, T, L and H.

The enzyme catalyses N(6)-[(R)-S(8)-aminomethyldihydrolipoyl]-L-lysyl-[protein] + (6S)-5,6,7,8-tetrahydrofolate = N(6)-[(R)-dihydrolipoyl]-L-lysyl-[protein] + (6R)-5,10-methylene-5,6,7,8-tetrahydrofolate + NH4(+). The glycine cleavage system catalyzes the degradation of glycine. This Bacillus subtilis (strain 168) protein is Aminomethyltransferase.